The chain runs to 356 residues: Glucose 1-dehydrogenase (356 aa).

The tract at residues 1-26 is disordered; sequence MDAIVVSKADRTPRLVDRPRPDPTPG. Over residues 8 to 21 the composition is skewed to basic and acidic residues; sequence KADRTPRLVDRPRP. Position 38 (Asp-38) interacts with Zn(2+). Thr-40 serves as a coordination point for substrate. 2 residues coordinate Zn(2+): His-63 and Glu-64. A disordered region spans residues 86 to 107; sequence TVRRPRGDPTPQFDRGQPDMAA. Substrate contacts are provided by Glu-113 and Glu-149. Glu-149 is a binding site for Zn(2+). NADP(+)-binding positions include 180–183, 205–206, 270–272, and 300–302; these read NGSL, RR, LGV, and SVN. Residue Asn-302 coordinates substrate.

The protein belongs to the zinc-containing alcohol dehydrogenase family. Glucose 1-dehydrogenase subfamily. It depends on Zn(2+) as a cofactor.

It carries out the reaction D-glucose + NAD(+) = D-glucono-1,5-lactone + NADH + H(+). It catalyses the reaction D-glucose + NADP(+) = D-glucono-1,5-lactone + NADPH + H(+). In terms of biological role, catalyzes the NAD(P)(+)-dependent oxidation of D-glucose to D-gluconate via gluconolactone. Can utilize both NAD(+) and NADP(+) as electron acceptor. Is involved in the degradation of glucose through a modified Entner-Doudoroff pathway. The sequence is that of Glucose 1-dehydrogenase from Halobacterium salinarum (strain ATCC 700922 / JCM 11081 / NRC-1) (Halobacterium halobium).